We begin with the raw amino-acid sequence, 83 residues long: Putative defensin-like protein 257 (83 aa).

Positions 1 to 25 (MMNVSLKLSFLVFILVIMSNLGSEA) are cleaved as a signal peptide. Disulfide bonds link C57–C73, C63–C80, and C67–C82.

This sequence belongs to the DEFL family.

It is found in the secreted. The chain is Putative defensin-like protein 257 from Arabidopsis thaliana (Mouse-ear cress).